Here is a 113-residue protein sequence, read N- to C-terminus: MEKVLVLLLVSLLAVAYAAPGPRGLIINLEDGEICLNSMQCKSRCCQHDTILGIARCTHKAMENSECSPKTLYGIYYRCPCERGLTCEGDRSIIGAITNTNYGICLDSRRSKQ.

A signal peptide spans 1–18 (MEKVLVLLLVSLLAVAYA). Positions 19-23 (APGPR) are cleaved as a propeptide — enterostatin, activation peptide. Disulfide bonds link Cys35-Cys46, Cys41-Cys57, Cys45-Cys79, Cys67-Cys87, and Cys81-Cys105.

This sequence belongs to the colipase family. As to quaternary structure, forms a 1:1 stoichiometric complex with pancreatic lipase. In terms of tissue distribution, expressed by the pancreas.

It is found in the secreted. Colipase is a cofactor of pancreatic lipase. It allows the lipase to anchor itself to the lipid-water interface. Without colipase the enzyme is washed off by bile salts, which have an inhibitory effect on the lipase. Its function is as follows. Enterostatin has a biological activity as a satiety signal. The chain is Colipase from Mus musculus (Mouse).